The sequence spans 96 residues: Probable quinol oxidase subunit 4 (96 aa).

A run of 3 helical transmembrane segments spans residues 8 to 28 (TVGFIASIVLTLLAVFVTLYT), 36 to 56 (VTIIFGFAFIQAALQLLMFMH), and 68 to 88 (FKVIFAIIITLVTVIGTYWVM).

Belongs to the cytochrome c oxidase bacterial subunit 4 family.

Its subcellular location is the cell membrane. The enzyme catalyses 2 a quinol + O2 = 2 a quinone + 2 H2O. Its function is as follows. Catalyzes quinol oxidation with the concomitant reduction of oxygen to water. This Staphylococcus epidermidis (strain ATCC 35984 / DSM 28319 / BCRC 17069 / CCUG 31568 / BM 3577 / RP62A) protein is Probable quinol oxidase subunit 4 (qoxD).